Reading from the N-terminus, the 314-residue chain is Ribosomal RNA small subunit methyltransferase H (314 aa).

S-adenosyl-L-methionine contacts are provided by residues 37–39, Asp57, Phe84, Asp105, and Gln112; that span reads GSH.

This sequence belongs to the methyltransferase superfamily. RsmH family.

Its subcellular location is the cytoplasm. The catalysed reaction is cytidine(1402) in 16S rRNA + S-adenosyl-L-methionine = N(4)-methylcytidine(1402) in 16S rRNA + S-adenosyl-L-homocysteine + H(+). Functionally, specifically methylates the N4 position of cytidine in position 1402 (C1402) of 16S rRNA. This Fusobacterium nucleatum subsp. nucleatum (strain ATCC 25586 / DSM 15643 / BCRC 10681 / CIP 101130 / JCM 8532 / KCTC 2640 / LMG 13131 / VPI 4355) protein is Ribosomal RNA small subunit methyltransferase H.